We begin with the raw amino-acid sequence, 133 residues long: ATP synthase epsilon chain, chloroplastic (133 aa).

It belongs to the ATPase epsilon chain family. As to quaternary structure, F-type ATPases have 2 components, CF(1) - the catalytic core - and CF(0) - the membrane proton channel. CF(1) has five subunits: alpha(3), beta(3), gamma(1), delta(1), epsilon(1). CF(0) has three main subunits: a, b and c.

The protein resides in the plastid. The protein localises to the chloroplast thylakoid membrane. Functionally, produces ATP from ADP in the presence of a proton gradient across the membrane. The polypeptide is ATP synthase epsilon chain, chloroplastic (Cyanidium caldarium (Red alga)).